Consider the following 422-residue polypeptide: GTPase Obg (422 aa).

Residues 1–158 (MFYDRARIFV…RWLDLELKLL (158 aa)) form the Obg domain. The OBG-type G domain occupies 159 to 329 (ADVGLVGFPN…LVYRVSALLE (171 aa)). GTP is bound by residues 165–172 (GFPNAGKS), 190–194 (FTTIT), 212–215 (DIPG), 282–285 (NKMD), and 310–312 (SAV). Residues Ser172 and Thr192 each contribute to the Mg(2+) site. One can recognise an OCT domain in the interval 337-422 (VPEALERPVI…IGDYEFEYVE (86 aa)).

This sequence belongs to the TRAFAC class OBG-HflX-like GTPase superfamily. OBG GTPase family. In terms of assembly, monomer. It depends on Mg(2+) as a cofactor.

It is found in the cytoplasm. Its function is as follows. An essential GTPase which binds GTP, GDP and possibly (p)ppGpp with moderate affinity, with high nucleotide exchange rates and a fairly low GTP hydrolysis rate. Plays a role in control of the cell cycle, stress response, ribosome biogenesis and in those bacteria that undergo differentiation, in morphogenesis control. This is GTPase Obg from Pelotomaculum thermopropionicum (strain DSM 13744 / JCM 10971 / SI).